The following is a 1026-amino-acid chain: Adenylate-forming reductase 06235 (1026 aa).

The adenylation (A) domain stretch occupies residues 37–422; that stretch reads FEFHAKANPD…LGRIDNQVKI (386 aa). AMP is bound by residues 332–333 and 412–415; these read VT and HLGR. The thiolation and peptide carrier (T) domain stretch occupies residues 556–638; the sequence is SLVSTVGSTV…ALFIWILVTK (83 aa). Positions 682–901 are reductase (R) domain; that stretch reads CIRRVCARIY…PPTKMWVKGV (220 aa). NADP(+)-binding positions include 685–688, 769–771, and Y840; these read RVCA and TAL.

This sequence belongs to the adenylate-forming reductase family.

Its function is as follows. Adenylate-forming reductase, a natural product biosynthesis enzyme that resembles non-ribosomal peptide synthetases, yet serves to modify one substrate, rather than to condense two or more building blocks. The A-domain preferentially accepts L-serine, L-alanine and L-valine as substrates. The natural product of the enzyme is not yet known. The protein is Adenylate-forming reductase 06235 of Coprinopsis cinerea (strain Okayama-7 / 130 / ATCC MYA-4618 / FGSC 9003) (Inky cap fungus).